Consider the following 273-residue polypeptide: Cytochrome b-c1 complex subunit Rieske, mitochondrial (273 aa).

Residues 1-61 constitute a mitochondrion transit peptide; sequence MLRVAGRRLS…PFFVASRGFS (61 aa). Residues 25–46 are disordered; that stretch reads PLAGAGVPDRDDDSARGRSQPR. Over 62 to 110 the chain is Mitochondrial matrix; it reads STETVVPRNQDAGLADLPATVAAVKNPNPKVVYDEYNHERYPPGDPSKR. Residues 111–133 form a helical membrane-spanning segment; the sequence is AFAYFVLSGGRFIYASLLRLLVL. At 134 to 273 the chain is on the mitochondrial intermembrane side; the sequence is KFVLSMSASK…FLEENKLLVG (140 aa). Residues 176-271 form the Rieske domain; that stretch reads RRRTEDDIKL…YSFLEENKLL (96 aa). [2Fe-2S] cluster-binding residues include cysteine 216, histidine 218, cysteine 235, and histidine 238. A disulfide bridge links cysteine 221 with cysteine 237.

It belongs to the Rieske iron-sulfur protein family. In terms of assembly, component of the ubiquinol-cytochrome c oxidoreductase (cytochrome b-c1 complex, complex III, CIII), a multisubunit enzyme composed of 3 respiratory subunits cytochrome b, cytochrome c1 and Rieske protein, 2 core protein subunits, and several low-molecular weight protein subunits. The complex exists as an obligatory dimer and forms supercomplexes (SCs) in the inner mitochondrial membrane with cytochrome c oxidase (complex IV, CIV). Requires [2Fe-2S] cluster as cofactor.

Its subcellular location is the mitochondrion inner membrane. The catalysed reaction is a quinol + 2 Fe(III)-[cytochrome c](out) = a quinone + 2 Fe(II)-[cytochrome c](out) + 2 H(+)(out). Its function is as follows. Component of the ubiquinol-cytochrome c oxidoreductase, a multisubunit transmembrane complex that is part of the mitochondrial electron transport chain which drives oxidative phosphorylation. The respiratory chain contains 3 multisubunit complexes succinate dehydrogenase (complex II, CII), ubiquinol-cytochrome c oxidoreductase (cytochrome b-c1 complex, complex III, CIII) and cytochrome c oxidase (complex IV, CIV), that cooperate to transfer electrons derived from NADH and succinate to molecular oxygen, creating an electrochemical gradient over the inner membrane that drives transmembrane transport and the ATP synthase. The cytochrome b-c1 complex catalyzes electron transfer from ubiquinol to cytochrome c, linking this redox reaction to translocation of protons across the mitochondrial inner membrane, with protons being carried across the membrane as hydrogens on the quinol. In the process called Q cycle, 2 protons are consumed from the matrix, 4 protons are released into the intermembrane space and 2 electrons are passed to cytochrome c. The Rieske protein is a catalytic core subunit containing a [2Fe-2S] iron-sulfur cluster. It cycles between 2 conformational states during catalysis to transfer electrons from the quinol bound in the Q(0) site in cytochrome b to cytochrome c1. The sequence is that of Cytochrome b-c1 complex subunit Rieske, mitochondrial from Zea mays (Maize).